The chain runs to 101 residues: Urease subunit beta (101 aa).

Belongs to the urease beta subunit family. As to quaternary structure, heterotrimer of UreA (gamma), UreB (beta) and UreC (alpha) subunits. Three heterotrimers associate to form the active enzyme.

It localises to the cytoplasm. It carries out the reaction urea + 2 H2O + H(+) = hydrogencarbonate + 2 NH4(+). It functions in the pathway nitrogen metabolism; urea degradation; CO(2) and NH(3) from urea (urease route): step 1/1. The protein is Urease subunit beta of Pseudomonas fluorescens (strain ATCC BAA-477 / NRRL B-23932 / Pf-5).